The chain runs to 643 residues: Threonine--tRNA ligase (643 aa).

In terms of domain architecture, TGS spans 1–65; sequence MIHITLPDGS…NKDMPLSIVT (65 aa). The catalytic stretch occupies residues 246-537; it reads DHRKLGRELD…LIEQHAGAMP (292 aa). Positions 337, 388, and 514 each coordinate Zn(2+).

It belongs to the class-II aminoacyl-tRNA synthetase family. In terms of assembly, homodimer. It depends on Zn(2+) as a cofactor.

Its subcellular location is the cytoplasm. The catalysed reaction is tRNA(Thr) + L-threonine + ATP = L-threonyl-tRNA(Thr) + AMP + diphosphate + H(+). Functionally, catalyzes the attachment of threonine to tRNA(Thr) in a two-step reaction: L-threonine is first activated by ATP to form Thr-AMP and then transferred to the acceptor end of tRNA(Thr). Also edits incorrectly charged L-seryl-tRNA(Thr). The chain is Threonine--tRNA ligase from Delftia acidovorans (strain DSM 14801 / SPH-1).